A 302-amino-acid chain; its full sequence is Recombination-associated protein RdgC (302 aa).

This sequence belongs to the RdgC family.

The protein resides in the cytoplasm. It is found in the nucleoid. Its function is as follows. May be involved in recombination. In Actinobacillus pleuropneumoniae serotype 5b (strain L20), this protein is Recombination-associated protein RdgC.